Consider the following 296-residue polypeptide: tRNA (guanine-N(7)-)-methyltransferase (296 aa).

Residues Met-1–Pro-26 are disordered. S-adenosyl-L-methionine-binding positions include Gly-101, Glu-124–Ile-125, Asn-168–Ser-169, and Leu-188. The active site involves Asp-191. Residue Thr-266–Glu-268 coordinates S-adenosyl-L-methionine.

It belongs to the class I-like SAM-binding methyltransferase superfamily. TrmB family. In terms of assembly, forms a complex with TRM82.

It localises to the nucleus. The enzyme catalyses guanosine(46) in tRNA + S-adenosyl-L-methionine = N(7)-methylguanosine(46) in tRNA + S-adenosyl-L-homocysteine. Its pathway is tRNA modification; N(7)-methylguanine-tRNA biosynthesis. Functionally, catalyzes the formation of N(7)-methylguanine at position 46 (m7G46) in tRNA. This is tRNA (guanine-N(7)-)-methyltransferase from Cryptococcus neoformans var. neoformans serotype D (strain JEC21 / ATCC MYA-565) (Filobasidiella neoformans).